A 142-amino-acid chain; its full sequence is FAD synthase (142 aa).

ATP contacts are provided by residues 9 to 10 (TF), 14 to 17 (HPGH), and aspartate 92.

It belongs to the archaeal FAD synthase family. In terms of assembly, homodimer. It depends on a divalent metal cation as a cofactor.

The catalysed reaction is FMN + ATP + H(+) = FAD + diphosphate. It participates in cofactor biosynthesis; FAD biosynthesis; FAD from FMN: step 1/1. Functionally, catalyzes the transfer of the AMP portion of ATP to flavin mononucleotide (FMN) to produce flavin adenine dinucleotide (FAD) coenzyme. The protein is FAD synthase of Methanohalophilus mahii (strain ATCC 35705 / DSM 5219 / SLP).